The following is a 599-amino-acid chain: Elongation factor 4 (599 aa).

One can recognise a tr-type G domain in the interval 4 to 185 (KNIRNFSIIA…VIIKKVPSPK (182 aa)). Residues 16-21 (DHGKST) and 132-135 (NKVD) contribute to the GTP site.

This sequence belongs to the TRAFAC class translation factor GTPase superfamily. Classic translation factor GTPase family. LepA subfamily.

It localises to the cell membrane. It catalyses the reaction GTP + H2O = GDP + phosphate + H(+). Functionally, required for accurate and efficient protein synthesis under certain stress conditions. May act as a fidelity factor of the translation reaction, by catalyzing a one-codon backward translocation of tRNAs on improperly translocated ribosomes. Back-translocation proceeds from a post-translocation (POST) complex to a pre-translocation (PRE) complex, thus giving elongation factor G a second chance to translocate the tRNAs correctly. Binds to ribosomes in a GTP-dependent manner. This Mycoplasmoides gallisepticum (strain R(low / passage 15 / clone 2)) (Mycoplasma gallisepticum) protein is Elongation factor 4.